The following is an 850-amino-acid chain: Rho guanine nucleotide exchange factor 33 (850 aa).

Composition is skewed to basic and acidic residues over residues 1-13 (MEKSKAKQGENEH) and 98-113 (EEMQQKIEQLQQEKRR). Disordered stretches follow at residues 1–21 (MEKSKAKQGENEHMPVNNPST) and 98–209 (EEMQ…DENL). Positions 54–128 (LEEKVKSCRC…KAKKAQKEEH (75 aa)) form a coiled coil. The span at 130–149 (AQAGPASAPAPGSAPTQGSP) shows a compositional bias: low complexity. Positions 164-175 (DFTNMLPSQNYE) are enriched in polar residues. The region spanning 273-448 (KRQTVALELL…RVFISHYTLL (176 aa)) is the DH domain. 2 disordered regions span residues 504 to 550 (EMLQ…WELE) and 702 to 850 (AAQA…WGWW). 2 stretches are compositionally biased toward low complexity: residues 510–520 (PSSSSSAPAVS) and 754–770 (APHGPAAAAAASRGAPR). R766 carries the post-translational modification Omega-N-methylarginine. Residues 773-783 (FPQQRSQSEKQ) show a composition bias toward polar residues. Basic and acidic residues predominate over residues 784 to 806 (TYLEEMHLEDATRFCPKEERESE). A compositionally biased stretch (basic residues) spans 826 to 835 (SFRKLFKKKN).

In Mus musculus (Mouse), this protein is Rho guanine nucleotide exchange factor 33 (Arhgef33).